The sequence spans 1895 residues: Diacylglycerol kinase eta (1895 aa).

Residues 1–10 (MAHLKLDTLH) are compositionally biased toward basic and acidic residues. The segment at 1–37 (MAHLKLDTLHVQRSPRGSRRSSPSSGRSSACSSGSIS) is disordered. Residues 20–37 (RSSPSSGRSSACSSGSIS) show a composition bias toward low complexity. The PH domain occupies 82 to 175 (AIIKEGFLLK…WLGSLKTATA (94 aa)). Phorbol-ester/DAG-type zinc fingers lie at residues 195–245 (HHHW…IANC) and 267–318 (PHQW…AVAC). The DAGKc domain occupies 349–485 (GNFSPLLVFV…DRWSIMVFEK (137 aa)). Disordered stretches follow at residues 781–801 (ANIDDAGNRLSPCSDAGENTP), 1012–1053 (TTLC…MARL), 1113–1137 (QHRGGDNDSDYPEHEQTPTNKGANL), and 1172–1191 (PNTILTTSTSPTKKSGHGQD). The span at 1113–1128 (QHRGGDNDSDYPEHEQ) shows a compositional bias: basic and acidic residues. Residues 1172-1184 (PNTILTTSTSPTK) are compositionally biased toward polar residues. An SAM domain is found at 1832 to 1895 (WSVNEVVTWL…LQAIKDLSEN (64 aa)).

Belongs to the eukaryotic diacylglycerol kinase family.

Its subcellular location is the cytoplasm. The enzyme catalyses a 1,2-diacyl-sn-glycerol + ATP = a 1,2-diacyl-sn-glycero-3-phosphate + ADP + H(+). Phosphorylates diacylglycerol (DAG) to generate phosphatidic acid (PA). In Drosophila melanogaster (Fruit fly), this protein is Diacylglycerol kinase eta.